The following is a 132-amino-acid chain: Small ribosomal subunit protein uS8 (132 aa).

This sequence belongs to the universal ribosomal protein uS8 family. As to quaternary structure, part of the 30S ribosomal subunit. Contacts proteins S5 and S12.

Functionally, one of the primary rRNA binding proteins, it binds directly to 16S rRNA central domain where it helps coordinate assembly of the platform of the 30S subunit. The chain is Small ribosomal subunit protein uS8 from Natranaerobius thermophilus (strain ATCC BAA-1301 / DSM 18059 / JW/NM-WN-LF).